A 367-amino-acid polypeptide reads, in one-letter code: Septin-1 (367 aa).

The Septin-type G domain maps to 22–296 (KGFDFTLMVA…EGYRARCLQS (275 aa)). Positions 32-39 (GESGLGKS) are G1 motif. GTP is bound by residues 32 to 39 (GESGLGKS), Thr-66, Gly-92, and 171 to 179 (KADALMPKE). The interval 89-92 (DTPG) is G3 motif. The tract at residues 170-173 (GKAD) is G4 motif. Ser-206 carries the post-translational modification Phosphoserine. GTP contacts are provided by Gly-229 and Arg-245. Ser-248 bears the Phosphoserine; by AURKB mark. At Thr-251 the chain carries Phosphothreonine. 2 positions are modified to phosphoserine; by AURKB: Ser-307 and Ser-315.

It belongs to the TRAFAC class TrmE-Era-EngA-EngB-Septin-like GTPase superfamily. Septin GTPase family. As to quaternary structure, septins polymerize into heterooligomeric protein complexes that form filaments, and can associate with cellular membranes, actin filaments and microtubules. GTPase activity is required for filament formation. Interacts with AURKB.

The protein localises to the cytoplasm. Its subcellular location is the cytoskeleton. The protein resides in the microtubule organizing center. It localises to the centrosome. It is found in the midbody. Filament-forming cytoskeletal GTPase. May play a role in cytokinesis (Potential). The polypeptide is Septin-1 (Bos taurus (Bovine)).